The primary structure comprises 138 residues: Acidic phospholipase A2 CoaPLA2 (138 aa).

The signal sequence occupies residues 1 to 16 (MRTLWIVAVLLLGVEG). 7 cysteine pairs are disulfide-bonded: Cys-42-Cys-131, Cys-44-Cys-60, Cys-59-Cys-111, Cys-65-Cys-138, Cys-66-Cys-104, Cys-73-Cys-97, and Cys-91-Cys-102. Ca(2+) contacts are provided by Tyr-43, Gly-45, and Gly-47. Residue His-63 is part of the active site. Asp-64 is a binding site for Ca(2+). Asp-105 is a catalytic residue.

The protein belongs to the phospholipase A2 family. Group II subfamily. D49 sub-subfamily. In terms of assembly, homodimer. Ca(2+) serves as cofactor. As to expression, expressed by the venom gland.

Its subcellular location is the secreted. The catalysed reaction is a 1,2-diacyl-sn-glycero-3-phosphocholine + H2O = a 1-acyl-sn-glycero-3-phosphocholine + a fatty acid + H(+). Its function is as follows. Snake venom phospholipase A2 (PLA2) that shows very low inhibition of ADP-induced platelet aggregation in platelet-rich plasma of human, rabbit and guinea pig. Shows edema-inducing activity and myotoxicity. PLA2 catalyzes the calcium-dependent hydrolysis of the 2-acyl groups in 3-sn-phosphoglycerides. This chain is Acidic phospholipase A2 CoaPLA2, found in Crotalus lutosus abyssus (Grand Canyon rattlesnake).